The following is a 440-amino-acid chain: Tyrosine--tRNA ligase (440 aa).

An L-tyrosine-binding site is contributed by Tyr-46. The 'HIGH' region motif lies at 51-60 (PTAASLHIGN). Positions 181 and 185 each coordinate L-tyrosine. The 'KMSKS' region signature appears at 241 to 245 (KFGKS). Position 244 (Lys-244) interacts with ATP. The 67-residue stretch at 373–439 (DRVIDAAQAA…GKKALGAVEN (67 aa)) folds into the S4 RNA-binding domain.

The protein belongs to the class-I aminoacyl-tRNA synthetase family. TyrS type 1 subfamily. In terms of assembly, homodimer.

It localises to the cytoplasm. The enzyme catalyses tRNA(Tyr) + L-tyrosine + ATP = L-tyrosyl-tRNA(Tyr) + AMP + diphosphate + H(+). Functionally, catalyzes the attachment of tyrosine to tRNA(Tyr) in a two-step reaction: tyrosine is first activated by ATP to form Tyr-AMP and then transferred to the acceptor end of tRNA(Tyr). The protein is Tyrosine--tRNA ligase of Bifidobacterium longum (strain NCC 2705).